The following is a 467-amino-acid chain: Receptor-like cytosolic serine/threonine-protein kinase RBK1 (467 aa).

Basic and acidic residues predominate over residues 1-24 (MAVEDNKNSESKNHQEVELHRNDL). Positions 1 to 73 (MAVEDNKNSE…PFSNTTKTVS (73 aa)) are disordered. The segment covering 40–71 (SDSDNSSSSCSSCSSDDKSSSTSSPFSNTTKT) has biased composition (low complexity). Phosphothreonine is present on T142. The region spanning 153–430 (FNPENMIGKG…LRGEDGPAEL (278 aa)) is the Protein kinase domain. ATP contacts are provided by residues 159 to 167 (IGKGGHAEV) and K181. The active-site Proton acceptor is the D278. S282 is subject to Phosphoserine. A Phosphothreonine modification is found at T318. Y326 is subject to Phosphotyrosine.

This sequence belongs to the protein kinase superfamily. Ser/Thr protein kinase family. In terms of assembly, interacts with ARAC5 and ARAC10. In terms of tissue distribution, mostly expressed in vasculature, hydathode endothem, leaf mesophyll cells and trichomes.

It is found in the cytoplasm. The protein resides in the endomembrane system. Its subcellular location is the nucleus. The catalysed reaction is L-seryl-[protein] + ATP = O-phospho-L-seryl-[protein] + ADP + H(+). It carries out the reaction L-threonyl-[protein] + ATP = O-phospho-L-threonyl-[protein] + ADP + H(+). In Arabidopsis thaliana (Mouse-ear cress), this protein is Receptor-like cytosolic serine/threonine-protein kinase RBK1 (RBK1).